The chain runs to 92 residues: Small ribosomal subunit protein uS19 (92 aa).

The protein belongs to the universal ribosomal protein uS19 family.

Protein S19 forms a complex with S13 that binds strongly to the 16S ribosomal RNA. The polypeptide is Small ribosomal subunit protein uS19 (Legionella pneumophila (strain Paris)).